A 224-amino-acid polypeptide reads, in one-letter code: MAITDWPEDERPREKLLARGAQALSDAELLAIFLRTGQQGLTAVDLARRQLVSSGGLRAMLDLSPERMAHLPGMGVARRALLLAALELGRRYLAEPLERGLPLDNPDKAGQLLTAQLRGLPFEVFACLFLDNKHRLIAFEKLFQGTIDAAAVYPREVVRRAMEHNAAAVILAHNHPSGVAEPSQSDHAITRRLVEALGLVEVRVLDHLVIGDGGWVSLASRGAV.

Residues 102 to 224 (PLDNPDKAGQ…WVSLASRGAV (123 aa)) form the MPN domain. His173, His175, and Asp186 together coordinate Zn(2+). Residues 173-186 (HNHPSGVAEPSQSD) carry the JAMM motif motif.

The protein belongs to the UPF0758 family.

This is UPF0758 protein ABO_0214 from Alcanivorax borkumensis (strain ATCC 700651 / DSM 11573 / NCIMB 13689 / SK2).